Consider the following 323-residue polypeptide: Germacrene A synthase (323 aa).

Aspartate 82, aspartate 86, asparagine 222, serine 226, and glutamate 230 together coordinate Mg(2+). The DDXXD motif motif lies at aspartate 82 to aspartate 86.

Belongs to the terpene synthase family. It depends on Mg(2+) as a cofactor.

It catalyses the reaction (2E,6E)-farnesyl diphosphate = 5-epi-alpha-selinene + diphosphate. In terms of biological role, catalyzes the cyclization of farnesyl diphosphate (FPP) to the sesquiterpene germacrene A. This chain is Germacrene A synthase, found in Nostoc punctiforme (strain ATCC 29133 / PCC 73102).